The sequence spans 237 residues: Methylosome subunit pICln (237 aa).

S2 carries the post-translational modification N-acetylserine. Residues S102, S144, S193, and S195 each carry the phosphoserine modification. T223 is modified (phosphothreonine).

It belongs to the pICln (TC 1.A.47) family. Component of the methylosome, a 20S complex containing at least PRMT5/SKB1, WDR77/MEP50 and CLNS1A/pICln. May mediate SNRPD1 and SNRPD3 methylation. Forms a 6S pICln-Sm complex composed of CLNS1A/pICln, SNRPD1, SNRPD2, SNRPE, SNRPF and SNRPG; ring-like structure where CLNS1A/pICln mimics additional Sm proteins and which is unable to assemble into the core snRNP. Interacts with LSM10 and LSM11.

It localises to the cytoplasm. The protein resides in the cytosol. It is found in the nucleus. Its subcellular location is the cytoskeleton. Its function is as follows. Involved in both the assembly of spliceosomal snRNPs and the methylation of Sm proteins. Chaperone that regulates the assembly of spliceosomal U1, U2, U4 and U5 small nuclear ribonucleoproteins (snRNPs), the building blocks of the spliceosome, and thereby plays an important role in the splicing of cellular pre-mRNAs. Most spliceosomal snRNPs contain a common set of Sm proteins SNRPB, SNRPD1, SNRPD2, SNRPD3, SNRPE, SNRPF and SNRPG that assemble in a heptameric protein ring on the Sm site of the small nuclear RNA to form the core snRNP (Sm core). In the cytosol, the Sm proteins SNRPD1, SNRPD2, SNRPE, SNRPF and SNRPG are trapped in an inactive 6S pICln-Sm complex by the chaperone CLNS1A that controls the assembly of the core snRNP. Dissociation by the SMN complex of CLNS1A from the trapped Sm proteins and their transfer to an SMN-Sm complex triggers the assembly of core snRNPs and their transport to the nucleus. The protein is Methylosome subunit pICln (CLNS1A) of Pongo abelii (Sumatran orangutan).